The following is a 324-amino-acid chain: Beta-ketoacyl-[acyl-carrier-protein] synthase III (324 aa).

Catalysis depends on residues Cys112 and His249. Positions 250–254 (QANDR) are ACP-binding. Asn279 is an active-site residue.

Belongs to the thiolase-like superfamily. FabH family. As to quaternary structure, homodimer.

It is found in the cytoplasm. It catalyses the reaction malonyl-[ACP] + acetyl-CoA + H(+) = 3-oxobutanoyl-[ACP] + CO2 + CoA. The protein operates within lipid metabolism; fatty acid biosynthesis. Its function is as follows. Catalyzes the condensation reaction of fatty acid synthesis by the addition to an acyl acceptor of two carbons from malonyl-ACP. Catalyzes the first condensation reaction which initiates fatty acid synthesis and may therefore play a role in governing the total rate of fatty acid production. Possesses both acetoacetyl-ACP synthase and acetyl transacylase activities. Its substrate specificity determines the biosynthesis of branched-chain and/or straight-chain of fatty acids. The protein is Beta-ketoacyl-[acyl-carrier-protein] synthase III of Streptococcus pneumoniae serotype 2 (strain D39 / NCTC 7466).